The sequence spans 354 residues: Methionine import ATP-binding protein MetN (354 aa).

Positions 8 to 250 (LDHIDITFHQ…PKEALTQEFI (243 aa)) constitute an ABC transporter domain. 42–49 (GYSGAGKS) is an ATP binding site.

Belongs to the ABC transporter superfamily. Methionine importer (TC 3.A.1.24) family. In terms of assembly, the complex is composed of two ATP-binding proteins (MetN), two transmembrane proteins (MetI) and a solute-binding protein (MetQ).

It localises to the cell membrane. It carries out the reaction L-methionine(out) + ATP + H2O = L-methionine(in) + ADP + phosphate + H(+). The enzyme catalyses D-methionine(out) + ATP + H2O = D-methionine(in) + ADP + phosphate + H(+). Its function is as follows. Part of the ABC transporter complex MetNIQ involved in methionine import. Responsible for energy coupling to the transport system. The protein is Methionine import ATP-binding protein MetN of Streptococcus pyogenes serotype M4 (strain MGAS10750).